Reading from the N-terminus, the 137-residue chain is Glutamate mutase sigma subunit (137 aa).

Residues 3–137 (KKTIVLGVIG…ADLKKDLNIE (135 aa)) enclose the B12-binding domain. Residues 13-17 (SDCHA), H16, 61-63 (SSL), and 93-97 (NIVVG) each bind adenosylcob(III)alamin.

This sequence belongs to the methylaspartate mutase GlmS subunit family. In terms of assembly, heterotetramer composed of 2 epsilon subunits (GlmE) and 2 sigma subunits (GlmS). GlmE exists as a homodimer and GlmS as a monomer. The cofactor is adenosylcob(III)alamin.

It carries out the reaction (2S,3S)-3-methyl-L-aspartate = L-glutamate. Its pathway is amino-acid degradation; L-glutamate degradation via mesaconate pathway; acetate and pyruvate from L-glutamate: step 1/4. With respect to regulation, competitively inhibited by (2S,4S)-4-fluoroglutamate, 2-methyleneglutarate, (2R,3RS)-3-fluoroglutamate and (S)-3-methylitaconate. Catalyzes the carbon skeleton rearrangement of L-glutamate to L-threo-3-methylaspartate ((2S,3S)-3-methylaspartate). This is Glutamate mutase sigma subunit from Clostridium cochlearium.